The following is a 239-amino-acid chain: MNSNTHAKSSNFHQSELDKFAALANRWWDADGPQKPLHALNPVRLEYVSARLEPAGARVLDVGCGGGLLSESMARLGAQVTAIDLAPELVKVARLHSLESGVQVDYRVQSVEDLAAEQAGSFDAVTCMEMLEHVPDPTAIIRACASLLKPGGKLFLSTLNRTPAAFALAVVGAEYIARLLPKGTHHYKDFIKPAELAAWLRNAGLQLEDVSGMLYEPWRNRARLSSRTEVNYLAYAVKP.

Positions 44, 63, 84, and 128 each coordinate S-adenosyl-L-methionine.

Belongs to the methyltransferase superfamily. UbiG/COQ3 family.

It carries out the reaction a 3-demethylubiquinol + S-adenosyl-L-methionine = a ubiquinol + S-adenosyl-L-homocysteine + H(+). The catalysed reaction is a 3-(all-trans-polyprenyl)benzene-1,2-diol + S-adenosyl-L-methionine = a 2-methoxy-6-(all-trans-polyprenyl)phenol + S-adenosyl-L-homocysteine + H(+). It functions in the pathway cofactor biosynthesis; ubiquinone biosynthesis. Functionally, O-methyltransferase that catalyzes the 2 O-methylation steps in the ubiquinone biosynthetic pathway. This Xanthomonas axonopodis pv. citri (strain 306) protein is Ubiquinone biosynthesis O-methyltransferase.